The sequence spans 313 residues: Probable 5-dehydro-4-deoxyglucarate dehydratase 1 (313 aa).

Belongs to the DapA family.

It catalyses the reaction 5-dehydro-4-deoxy-D-glucarate + H(+) = 2,5-dioxopentanoate + CO2 + H2O. The protein operates within carbohydrate acid metabolism; D-glucarate degradation; 2,5-dioxopentanoate from D-glucarate: step 2/2. The sequence is that of Probable 5-dehydro-4-deoxyglucarate dehydratase 1 from Streptomyces avermitilis (strain ATCC 31267 / DSM 46492 / JCM 5070 / NBRC 14893 / NCIMB 12804 / NRRL 8165 / MA-4680).